We begin with the raw amino-acid sequence, 367 residues long: MSSSQTLVVKLGTSVLTGGSRRLDQSHIVELVRQCAKQHEKGHRIIIVTSGAIAAGREYLNYPDLPATIASKQLLAAVGQSALIQVWKQLFAIYGIHIGQMLLTRADIEDRERFLNARDTLHALLDNKIIPVINENDAVATAEIKVGDNDNLSALAAILGGADKLLLLTDIEGLYTADPRSNPDAKLIPEVFDINDELRQMAGDSVSGLGTGGMATKLQAATVAGRAGIDVVIAAGVKPDVISKVIDNEPVGTLFHGLKSPLETRKRWIFGAPVAGVIIVDNGAEKAIKEQGSSLLPKGIKEIKGDFSRGCVIRIQSLQGKDLAHGVAHYNSDALRLIAGHHSQEISQILGYEYGSVAVHRDDMIVS.

An ATP-binding site is contributed by K10. Substrate-binding residues include S50, D137, and N149. Residues 169-170 (TD) and 211-217 (TGGMATK) each bind ATP. Positions 275 to 353 (AGVIIVDNGA…QEISQILGYE (79 aa)) constitute a PUA domain.

This sequence belongs to the glutamate 5-kinase family.

It localises to the cytoplasm. It catalyses the reaction L-glutamate + ATP = L-glutamyl 5-phosphate + ADP. It functions in the pathway amino-acid biosynthesis; L-proline biosynthesis; L-glutamate 5-semialdehyde from L-glutamate: step 1/2. Functionally, catalyzes the transfer of a phosphate group to glutamate to form L-glutamate 5-phosphate. This chain is Glutamate 5-kinase, found in Proteus mirabilis (strain HI4320).